The sequence spans 393 residues: Pinosylvin synthase (393 aa).

57 to 60 (KFKR) lines the substrate pocket. The active site involves Cys167. Residues Leu270 and 308-310 (GGR) contribute to the substrate site.

This sequence belongs to the thiolase-like superfamily. Chalcone/stilbene synthases family. In terms of assembly, homodimer.

Its subcellular location is the cytoplasm. The enzyme catalyses (E)-cinnamoyl-CoA + 3 malonyl-CoA + 3 H(+) = (E)-pinosylvin + 4 CO2 + 4 CoA. It carries out the reaction 3-phenylpropanoyl-CoA + 3 malonyl-CoA + 3 H(+) = dihydropinosylvin + 4 CO2 + 4 CoA. It participates in phytoalexin biosynthesis; hydropinosylvin biosynthesis. In terms of biological role, catalyzes the production of pinosylvin from cinnamoyl-CoA and malonyl-CoA, and dihydropinosylvin from dihydrocinnamoyl-CoA. The sequence is that of Pinosylvin synthase from Pinus sylvestris (Scotch pine).